The primary structure comprises 286 residues: 4-hydroxybenzoate octaprenyltransferase (286 aa).

The next 7 helical transmembrane spans lie at 20–40 (IGTLLLMWPCLMALVLAAGGM), 43–63 (LKVLVIFIIGVVVMRACGCII), 96–116 (LFVVMGLIAFGLVLMLNPLVV), 142–162 (FLGVVWSWSIPMAYAAQTGTV), 167–187 (WWLFAANWCWTVAYDTMYAMV), 210–230 (QVIALFQLAALACFIIAGWAA), and 234–254 (LVYALGIITFVGFSLYQQKLI).

This sequence belongs to the UbiA prenyltransferase family. Mg(2+) is required as a cofactor.

The protein localises to the cell inner membrane. It catalyses the reaction all-trans-octaprenyl diphosphate + 4-hydroxybenzoate = 4-hydroxy-3-(all-trans-octaprenyl)benzoate + diphosphate. The protein operates within cofactor biosynthesis; ubiquinone biosynthesis. In terms of biological role, catalyzes the prenylation of para-hydroxybenzoate (PHB) with an all-trans polyprenyl group. Mediates the second step in the final reaction sequence of ubiquinone-8 (UQ-8) biosynthesis, which is the condensation of the polyisoprenoid side chain with PHB, generating the first membrane-bound Q intermediate 3-octaprenyl-4-hydroxybenzoate. The polypeptide is 4-hydroxybenzoate octaprenyltransferase (Shewanella woodyi (strain ATCC 51908 / MS32)).